The following is a 220-amino-acid chain: Protein-L-isoaspartate O-methyltransferase (220 aa).

Residue Ser-68 is part of the active site.

The protein belongs to the methyltransferase superfamily. L-isoaspartyl/D-aspartyl protein methyltransferase family.

It localises to the cytoplasm. The catalysed reaction is [protein]-L-isoaspartate + S-adenosyl-L-methionine = [protein]-L-isoaspartate alpha-methyl ester + S-adenosyl-L-homocysteine. Catalyzes the methyl esterification of L-isoaspartyl residues in peptides and proteins that result from spontaneous decomposition of normal L-aspartyl and L-asparaginyl residues. It plays a role in the repair and/or degradation of damaged proteins. In Dictyoglomus turgidum (strain DSM 6724 / Z-1310), this protein is Protein-L-isoaspartate O-methyltransferase.